We begin with the raw amino-acid sequence, 754 residues long: Endoribonuclease Dicer-like (754 aa).

One can recognise a PAZ domain in the interval 132-251 (QLMCDAKRLS…LPPELCLLLP (120 aa)). RNase III domains are found at residues 298–418 (FAIT…TGPN) and 613–734 (AQTV…LACG). Residues glutamate 336, aspartate 404, glutamate 407, glutamate 649, aspartate 720, and glutamate 723 each contribute to the Mn(2+) site.

Homodimer. Requires Mg(2+) as cofactor. It depends on Mn(2+) as a cofactor.

Functionally, involved in cleaving double-stranded RNA in the RNA interference (RNAi) pathway. It produces 21 to 23 bp dsRNAs (siRNAs) which target the selective destruction of homologous RNAs. This Giardia intestinalis (strain ATCC 50803 / WB clone C6) (Giardia lamblia) protein is Endoribonuclease Dicer-like.